The chain runs to 318 residues: Protoheme IX farnesyltransferase (318 aa).

The next 9 helical transmembrane spans lie at 37 to 57 (LVIFTALVGIAVAPGGIHPVI), 58 to 78 (AFTALLCIAVGAGASGALNMW), 100 to 120 (VTAREAAVFGSILSVFAVMTM), 122 to 142 (VLVNWVAAALLAFTIFFYLVV), 155 to 175 (IVIGGAAGAFPPMIGWAAVTG), 182 to 202 (FVLFLIIFMWTPPHFWALALY), 228 to 248 (IMLYSLALVPVTLLPGFLGFA), 251 to 271 (LYMGATAALGAGFLWLAFGIW), and 291 to 311 (ILYLFLIFSLLLVEKMLGLGG).

The protein belongs to the UbiA prenyltransferase family. Protoheme IX farnesyltransferase subfamily.

The protein localises to the cell inner membrane. It carries out the reaction heme b + (2E,6E)-farnesyl diphosphate + H2O = Fe(II)-heme o + diphosphate. The protein operates within porphyrin-containing compound metabolism; heme O biosynthesis; heme O from protoheme: step 1/1. Its function is as follows. Converts heme B (protoheme IX) to heme O by substitution of the vinyl group on carbon 2 of heme B porphyrin ring with a hydroxyethyl farnesyl side group. The sequence is that of Protoheme IX farnesyltransferase from Parvibaculum lavamentivorans (strain DS-1 / DSM 13023 / NCIMB 13966).